We begin with the raw amino-acid sequence, 767 residues long: 5-methyltetrahydropteroyltriglutamate--homocysteine methyltransferase (767 aa).

Residues 16–19 and Lys-122 each bind 5-methyltetrahydropteroyltri-L-glutamate; that span reads RELK. L-homocysteine-binding positions include 443–445 and Glu-496; that span reads IGS. Residues 443–445 and Glu-496 contribute to the L-methionine site; that span reads IGS. Residues 527–528 and Trp-573 each bind 5-methyltetrahydropteroyltri-L-glutamate; that span reads RC. Residue Asp-611 participates in L-homocysteine binding. An L-methionine-binding site is contributed by Asp-611. Residue Glu-617 coordinates 5-methyltetrahydropteroyltri-L-glutamate. Positions 653, 655, and 677 each coordinate Zn(2+). His-706 (proton donor) is an active-site residue. A Zn(2+)-binding site is contributed by Cys-738.

This sequence belongs to the vitamin-B12 independent methionine synthase family. Zn(2+) is required as a cofactor.

The catalysed reaction is 5-methyltetrahydropteroyltri-L-glutamate + L-homocysteine = tetrahydropteroyltri-L-glutamate + L-methionine. Its pathway is amino-acid biosynthesis; L-methionine biosynthesis via de novo pathway; L-methionine from L-homocysteine (MetE route): step 1/1. In terms of biological role, catalyzes the transfer of a methyl group from 5-methyltetrahydrofolate to homocysteine resulting in methionine formation. In Ectopseudomonas mendocina (strain ymp) (Pseudomonas mendocina), this protein is 5-methyltetrahydropteroyltriglutamate--homocysteine methyltransferase.